Reading from the N-terminus, the 327-residue chain is GTP 3',8-cyclase (327 aa).

Residues 21–233 (SYGRRIRKLR…AKIQQKYSLK (213 aa)) enclose the Radical SAM core domain. Arg-30 contacts GTP. Residues Cys-37 and Cys-41 each contribute to the [4Fe-4S] cluster site. S-adenosyl-L-methionine is bound at residue Tyr-43. Position 44 (Cys-44) interacts with [4Fe-4S] cluster. Arg-79 provides a ligand contact to GTP. S-adenosyl-L-methionine is bound at residue Gly-83. Thr-109 contributes to the GTP binding site. Ser-133 lines the S-adenosyl-L-methionine pocket. Lys-169 is a GTP binding site. Met-203 is an S-adenosyl-L-methionine binding site. Positions 265 and 268 each coordinate [4Fe-4S] cluster. Residue 270 to 272 (RWR) coordinates GTP. Residue Cys-282 participates in [4Fe-4S] cluster binding.

Belongs to the radical SAM superfamily. MoaA family. Monomer and homodimer. [4Fe-4S] cluster serves as cofactor.

It catalyses the reaction GTP + AH2 + S-adenosyl-L-methionine = (8S)-3',8-cyclo-7,8-dihydroguanosine 5'-triphosphate + 5'-deoxyadenosine + L-methionine + A + H(+). It functions in the pathway cofactor biosynthesis; molybdopterin biosynthesis. In terms of biological role, catalyzes the cyclization of GTP to (8S)-3',8-cyclo-7,8-dihydroguanosine 5'-triphosphate. This chain is GTP 3',8-cyclase, found in Synechocystis sp. (strain ATCC 27184 / PCC 6803 / Kazusa).